Consider the following 190-residue polypeptide: Adenylate kinase (190 aa).

12–17 (GSGKTT) contacts ATP. Positions 33-62 (STGDLLRAEVASGSELGKTIDSFISKGNLV) are NMP. AMP is bound by residues Thr34, Arg39, 60 to 62 (NLV), 87 to 90 (GYPR), and Gln94. The tract at residues 129 to 135 (GRARGAD) is LID. Arg130 lines the ATP pocket. Arg132 and Arg144 together coordinate AMP. Arg172 is a binding site for ATP.

The protein belongs to the adenylate kinase family. In terms of assembly, monomer.

The protein localises to the cytoplasm. It carries out the reaction AMP + ATP = 2 ADP. It functions in the pathway purine metabolism; AMP biosynthesis via salvage pathway; AMP from ADP: step 1/1. In terms of biological role, catalyzes the reversible transfer of the terminal phosphate group between ATP and AMP. Plays an important role in cellular energy homeostasis and in adenine nucleotide metabolism. The polypeptide is Adenylate kinase (Campylobacter lari (strain RM2100 / D67 / ATCC BAA-1060)).